The chain runs to 341 residues: HTH-type transcriptional repressor PurR (341 aa).

The 55-residue stretch at 2-56 folds into the HTH lacI-type domain; it reads ATIKDVAKHAGVSTTTVSHVINKTRFVAENTKAAVWAAIKELHYSPSAVARSLKV. Positions 4 to 23 form a DNA-binding region, H-T-H motif; the sequence is IKDVAKHAGVSTTTVSHVIN. The DNA-binding element occupies 48–56; it reads SAVARSLKV. Hypoxanthine is bound by residues Y73, R190, T192, and D275.

As to quaternary structure, homodimer.

Its pathway is purine metabolism; purine nucleotide biosynthesis [regulation]. In terms of biological role, is the main repressor of the genes involved in the de novo synthesis of purine nucleotides, regulating purB, purC, purEK, purF, purHD, purL, purMN and guaBA expression. PurR is allosterically activated to bind its cognate DNA by binding the purine corepressors, hypoxanthine or guanine, thereby effecting transcription repression. This is HTH-type transcriptional repressor PurR from Yersinia pestis bv. Antiqua (strain Antiqua).